The primary structure comprises 233 residues: MADS-box transcription factor 56 (233 aa).

The region spanning 1–61 (MVRGRTELKR…GRLYEFASAP (61 aa)) is the MADS-box domain. The K-box domain maps to 87–177 (IQQVKDDTLG…RGKHRNLEAA (91 aa)).

The protein localises to the nucleus. In terms of biological role, probable transcription factor. The sequence is that of MADS-box transcription factor 56 (MADS56) from Oryza sativa subsp. japonica (Rice).